We begin with the raw amino-acid sequence, 364 residues long: Ribosomal RNA large subunit methyltransferase M (364 aa).

S-adenosyl-L-methionine contacts are provided by residues Ser187, 220–223, Asp239, Asp259, and Asp276; that span reads CPGG. Lys305 (proton acceptor) is an active-site residue.

It belongs to the class I-like SAM-binding methyltransferase superfamily. RNA methyltransferase RlmE family. RlmM subfamily. Monomer.

Its subcellular location is the cytoplasm. The catalysed reaction is cytidine(2498) in 23S rRNA + S-adenosyl-L-methionine = 2'-O-methylcytidine(2498) in 23S rRNA + S-adenosyl-L-homocysteine + H(+). In terms of biological role, catalyzes the 2'-O-methylation at nucleotide C2498 in 23S rRNA. This Aeromonas salmonicida (strain A449) protein is Ribosomal RNA large subunit methyltransferase M.